Reading from the N-terminus, the 203-residue chain is Histidine biosynthesis bifunctional protein HisIE (203 aa).

The interval M1–F114 is phosphoribosyl-AMP cyclohydrolase. Residues L115–Q203 are phosphoribosyl-ATP pyrophosphohydrolase.

It in the N-terminal section; belongs to the PRA-CH family. This sequence in the C-terminal section; belongs to the PRA-PH family.

Its subcellular location is the cytoplasm. It catalyses the reaction 1-(5-phospho-beta-D-ribosyl)-ATP + H2O = 1-(5-phospho-beta-D-ribosyl)-5'-AMP + diphosphate + H(+). The enzyme catalyses 1-(5-phospho-beta-D-ribosyl)-5'-AMP + H2O = 1-(5-phospho-beta-D-ribosyl)-5-[(5-phospho-beta-D-ribosylamino)methylideneamino]imidazole-4-carboxamide. Its pathway is amino-acid biosynthesis; L-histidine biosynthesis; L-histidine from 5-phospho-alpha-D-ribose 1-diphosphate: step 2/9. It functions in the pathway amino-acid biosynthesis; L-histidine biosynthesis; L-histidine from 5-phospho-alpha-D-ribose 1-diphosphate: step 3/9. The protein is Histidine biosynthesis bifunctional protein HisIE (hisI) of Salmonella typhimurium (strain LT2 / SGSC1412 / ATCC 700720).